Consider the following 57-residue polypeptide: Large ribosomal subunit protein bL32 (57 aa).

Residues 1–20 (MAVPKKKTSKAKRDQRRATW) show a composition bias toward basic residues. Positions 1-24 (MAVPKKKTSKAKRDQRRATWRRQA) are disordered.

This sequence belongs to the bacterial ribosomal protein bL32 family.

This is Large ribosomal subunit protein bL32 from Gloeothece citriformis (strain PCC 7424) (Cyanothece sp. (strain PCC 7424)).